Here is a 507-residue protein sequence, read N- to C-terminus: Probable allantoinase (507 aa).

Zn(2+) contacts are provided by His105, His107, Lys195, His231, His294, and Asp368. Lys195 is modified (N6-carboxylysine).

The protein belongs to the metallo-dependent hydrolases superfamily. Allantoinase family. As to quaternary structure, homotetramer. It depends on Zn(2+) as a cofactor. In terms of processing, carboxylation allows a single lysine to coordinate two zinc ions.

The enzyme catalyses (S)-allantoin + H2O = allantoate + H(+). The protein operates within nitrogen metabolism; (S)-allantoin degradation; allantoate from (S)-allantoin: step 1/1. Its function is as follows. Catalyzes the conversion of allantoin (5-ureidohydantoin) to allantoate by hydrolytic cleavage of the five-member hydantoin ring. Catalyzes the first step of the ureide allantoin degradation followed by the sequential activity of AAH, UGLYAH and UAH which allows a complete purine breakdown without the intermediate generation of urea. The chain is Probable allantoinase (ALN) from Oryza sativa subsp. japonica (Rice).